Consider the following 606-residue polypeptide: uncharacterized protein (606 aa).

This is an uncharacterized protein from Sinorhizobium fredii (strain NBRC 101917 / NGR234).